The primary structure comprises 568 residues: DEAD-box ATP-dependent RNA helicase 51 (568 aa).

Basic and acidic residues-rich tracts occupy residues Met-1–Lys-13 and Lys-23–Lys-47. Residues Met-1–Glu-70 are disordered. Residues Lys-13–Ile-78 adopt a coiled-coil conformation. The segment covering Glu-60 to Glu-70 has biased composition (acidic residues). Residues Val-89–Ala-117 carry the Q motif motif. A Helicase ATP-binding domain is found at Ile-120 to Val-295. Residue Ala-133–Thr-140 coordinates ATP. Residues Asp-243–Asp-246 carry the DEAD box motif. Positions Arg-321–Ser-468 constitute a Helicase C-terminal domain. The interval Lys-540 to Ala-568 is disordered.

It belongs to the DEAD box helicase family. DDX18/HAS1 subfamily.

The catalysed reaction is ATP + H2O = ADP + phosphate + H(+). This is DEAD-box ATP-dependent RNA helicase 51 (RH51) from Arabidopsis thaliana (Mouse-ear cress).